Reading from the N-terminus, the 442-residue chain is ORC1-type DNA replication protein 8 (442 aa).

Residues 66–70 (VGKTA) and Tyr-218 contribute to the ATP site.

Belongs to the CDC6/cdc18 family.

Functionally, involved in regulation of DNA replication. This chain is ORC1-type DNA replication protein 8 (cdc6h), found in Haloarcula marismortui (strain ATCC 43049 / DSM 3752 / JCM 8966 / VKM B-1809) (Halobacterium marismortui).